A 122-amino-acid polypeptide reads, in one-letter code: MVQQESRLKVADNTGAKEVLTIRVLGGTKRRYASVGDKIVVSIKDATPNGNVKKGAVSTAVVVRTKKEVRRADGSYIRFDDNACVLLNAAGEMRGTRVFGPVARELREKQFMKIVSLAPEVL.

Belongs to the universal ribosomal protein uL14 family. Part of the 50S ribosomal subunit. Forms a cluster with proteins L3 and L19. In the 70S ribosome, L14 and L19 interact and together make contacts with the 16S rRNA in bridges B5 and B8.

In terms of biological role, binds to 23S rRNA. Forms part of two intersubunit bridges in the 70S ribosome. The protein is Large ribosomal subunit protein uL14 of Flavobacterium johnsoniae (strain ATCC 17061 / DSM 2064 / JCM 8514 / BCRC 14874 / CCUG 350202 / NBRC 14942 / NCIMB 11054 / UW101) (Cytophaga johnsonae).